Consider the following 443-residue polypeptide: Probable nitrate/nitrite antiporter NarK2 (443 aa).

The next 12 helical transmembrane spans lie at 32–52 (ITTFNLTLSFITWYVVSALVV), 66–86 (LFWLTAMPGLAGGTLRIIWTF), 95–115 (HLVTFSTLLLLIPLLGWGFAV), 123–143 (WVLLLLAFLAGIGGGHFSGYM), 172–192 (IVQFVTPWIIGFALFGSLLGG), 210–230 (NATFAWVPFVLLGALLAWVYL), 256–276 (SLYIMTFGSFSGFSAIFPLLI), 292–312 (YAFLGPLVGSLARVIAGPISD), 314–334 (LGGAIVTQVSAIGIFLSALLV), 346–366 (FPMFVVAMLLIFFFSGVGNAS), 383–403 (VIGWTAAVAAYGPFLFSTLAA), and 409–429 (TGGFTAFFYGLMVFYAFNFFL).

Belongs to the major facilitator superfamily. Nitrate/nitrite porter (TC 2.A.1.8) family.

It localises to the cell membrane. The catalysed reaction is nitrate(in) + nitrite(out) = nitrate(out) + nitrite(in). In terms of biological role, probable nitrate/nitrite antiporter that may be involved in nitrate import and nitrite export during anaerobic growth. This Thermus thermophilus protein is Probable nitrate/nitrite antiporter NarK2.